Consider the following 196-residue polypeptide: Histone H1.0-B (196 aa).

Disordered regions lie at residues Met1 to Ser29 and Gly86 to Lys196. An H15 domain is found at Asp24 to Lys97. The span at Pro104–Lys196 shows a compositional bias: basic residues.

Belongs to the histone H1/H5 family.

It localises to the nucleus. It is found in the chromosome. In terms of biological role, histones H1 are necessary for the condensation of nucleosome chains into higher-order structures. The histones H1.0 are found in cells that are in terminal stages of differentiation or that have low rates of cell division. In Xenopus laevis (African clawed frog), this protein is Histone H1.0-B (h1-0-b).